We begin with the raw amino-acid sequence, 302 residues long: L-threonate dehydrogenase (302 aa).

Residues 7–35 (FHVG…TWGA) and Thr-102 each bind NAD(+). Residue Lys-178 is part of the active site. Residue Lys-246 coordinates NAD(+).

Belongs to the HIBADH-related family. L-threonate dehydrogenase subfamily.

The catalysed reaction is L-threonate + NAD(+) = 2-dehydro-L-erythronate + NADH + H(+). Its function is as follows. Catalyzes oxidation of L-threonate to 2-oxo-tetronate. Can use either NAD(+) or NADP(+) as cosubstrate, with a preference for NAD(+). In Escherichia coli O6:H1 (strain CFT073 / ATCC 700928 / UPEC), this protein is L-threonate dehydrogenase.